The chain runs to 243 residues: Carboxy-S-adenosyl-L-methionine synthase (243 aa).

S-adenosyl-L-methionine contacts are provided by residues Tyr39, 64–66, Asn132, and Arg199; that span reads GCS.

The protein belongs to the class I-like SAM-binding methyltransferase superfamily. Cx-SAM synthase family. Homodimer.

The catalysed reaction is prephenate + S-adenosyl-L-methionine = carboxy-S-adenosyl-L-methionine + 3-phenylpyruvate + H2O. Catalyzes the conversion of S-adenosyl-L-methionine (SAM) to carboxy-S-adenosyl-L-methionine (Cx-SAM). The sequence is that of Carboxy-S-adenosyl-L-methionine synthase from Alteromonas mediterranea (strain DSM 17117 / CIP 110805 / LMG 28347 / Deep ecotype).